The primary structure comprises 131 residues: Phosphomevalonate dehydratase small subunit (131 aa).

The Proton acceptor role is filled by S62.

The protein belongs to the AcnX type II small subunit family. As to quaternary structure, heterodimer composed of a large subunit (PMDh-L) and a small subunit (PMDh-S).

The enzyme catalyses (R)-5-phosphomevalonate = (2E)-3-methyl-5-phosphooxypent-2-enoate + H2O. It participates in isoprenoid biosynthesis; isopentenyl diphosphate biosynthesis via mevalonate pathway. Functionally, component of a hydro-lyase that catalyzes the dehydration of mevalonate 5-phosphate (MVA5P) to form trans-anhydromevalonate 5-phosphate (tAHMP). Involved in the archaeal mevalonate (MVA) pathway, which provides fundamental precursors for isoprenoid biosynthesis, such as isopentenyl diphosphate (IPP) and dimethylallyl diphosphate (DMAPP). The chain is Phosphomevalonate dehydratase small subunit from Methanothermobacter thermautotrophicus (strain ATCC 29096 / DSM 1053 / JCM 10044 / NBRC 100330 / Delta H) (Methanobacterium thermoautotrophicum).